The chain runs to 153 residues: Transcriptional regulator MraZ (153 aa).

SpoVT-AbrB domains follow at residues 7–61 (KEKH…LPDV) and 90–133 (LEMV…EPGR).

Belongs to the MraZ family. In terms of assembly, forms oligomers.

It is found in the cytoplasm. It localises to the nucleoid. This is Transcriptional regulator MraZ from Chlorobium luteolum (strain DSM 273 / BCRC 81028 / 2530) (Pelodictyon luteolum).